Reading from the N-terminus, the 318-residue chain is 4-diphosphocytidyl-2-C-methyl-D-erythritol kinase (318 aa).

Residue Lys-13 is part of the active site. 101–111 (PVAGGMAGGSA) lines the ATP pocket. Asp-143 is a catalytic residue. The interval 298-318 (PGARLVTDDRADRPTPPQVHA) is disordered.

This sequence belongs to the GHMP kinase family. IspE subfamily.

It catalyses the reaction 4-CDP-2-C-methyl-D-erythritol + ATP = 4-CDP-2-C-methyl-D-erythritol 2-phosphate + ADP + H(+). It functions in the pathway isoprenoid biosynthesis; isopentenyl diphosphate biosynthesis via DXP pathway; isopentenyl diphosphate from 1-deoxy-D-xylulose 5-phosphate: step 3/6. Its function is as follows. Catalyzes the phosphorylation of the position 2 hydroxy group of 4-diphosphocytidyl-2C-methyl-D-erythritol. This is 4-diphosphocytidyl-2-C-methyl-D-erythritol kinase from Saccharopolyspora erythraea (strain ATCC 11635 / DSM 40517 / JCM 4748 / NBRC 13426 / NCIMB 8594 / NRRL 2338).